Reading from the N-terminus, the 287-residue chain is Stomatin-like protein 3 (287 aa).

The residue at position 3 (S3) is a Phosphoserine. Residues 25 to 45 (WILFFLSFLLMLVTFPISVWM) form a helical; Signal-anchor for type III membrane protein membrane-spanning segment. The Cytoplasmic portion of the chain corresponds to 46 to 287 (CLKIIKEYER…GNNKKVTAKA (242 aa)). S237 carries the phosphoserine modification.

The protein belongs to the band 7/mec-2 family. Homodimer. Interacts with PIEZO1 and PIEZO2. In terms of tissue distribution, expressed by all dorsal root ganglion neurons and is selectively expressed in neuronal tissues. Detected in olfactory epithelium.

Its subcellular location is the cell membrane. Required for the function of many mechanoreceptors. Modulate mechanotransduction channels and acid-sensing ion channels (ASIC) proteins. Potentiates PIEZO1 and PIEZO2 function by increasing their sensitivity to mechanical stimulations. In Mus musculus (Mouse), this protein is Stomatin-like protein 3 (Stoml3).